Reading from the N-terminus, the 685-residue chain is DNA-directed RNA polymerase subunit beta' (685 aa).

Zn(2+) contacts are provided by cysteine 69, cysteine 71, cysteine 87, and cysteine 90. 3 residues coordinate Mg(2+): aspartate 492, aspartate 494, and aspartate 496.

It belongs to the RNA polymerase beta' chain family. RpoC1 subfamily. In terms of assembly, in plastids the minimal PEP RNA polymerase catalytic core is composed of four subunits: alpha, beta, beta', and beta''. When a (nuclear-encoded) sigma factor is associated with the core the holoenzyme is formed, which can initiate transcription. Requires Mg(2+) as cofactor. Zn(2+) serves as cofactor.

The protein resides in the plastid. It is found in the chloroplast. It catalyses the reaction RNA(n) + a ribonucleoside 5'-triphosphate = RNA(n+1) + diphosphate. DNA-dependent RNA polymerase catalyzes the transcription of DNA into RNA using the four ribonucleoside triphosphates as substrates. This is DNA-directed RNA polymerase subunit beta' from Dioscorea elephantipes (Elephant's foot yam).